Reading from the N-terminus, the 46-residue chain is TTCCPSIVARSNFNVCRLPGTPEALCATYTGCIIIPGATCPGDYAN.

3 disulfides stabilise this stretch: Cys3–Cys40, Cys4–Cys32, and Cys16–Cys26.

Belongs to the plant thionin (TC 1.C.44) family.

Its subcellular location is the secreted. Functionally, the function of this hydrophobic plant seed protein is not known. The polypeptide is Crambin (THI2) (Crambe hispanica subsp. abyssinica (Abyssinian kale)).